Consider the following 486-residue polypeptide: Histidine--tRNA ligase, chloroplastic/mitochondrial (486 aa).

It belongs to the class-II aminoacyl-tRNA synthetase family.

It localises to the plastid. It is found in the chloroplast. The protein resides in the mitochondrion. It catalyses the reaction tRNA(His) + L-histidine + ATP = L-histidyl-tRNA(His) + AMP + diphosphate + H(+). The chain is Histidine--tRNA ligase, chloroplastic/mitochondrial from Arabidopsis thaliana (Mouse-ear cress).